The primary structure comprises 288 residues: MELRDLQIFQSVADQGSVSSAAKELNYVQSNVTARIKQLENELKTPLFYRHKRGMTLTAEGRKMLVYVNKILQDVDELKQVFLDSETPSGILKIGTVETVSTLPTILSSYYKSYPNVDLSLQAGLTEELIREVLDHQLDGAFISGPIKHPLIEQYDVSTEKLMLVTQNKAFHIEEFTTTPLLVFNQGCGYRSKLERWLKDEGLLPKRIMEFNILETILNSVALGLGITLVPQSAVHHLSKAGKVHCHAIPEKYGSISTVFIRRKDSYMTNSMRSFLKTIEEHHHINML.

The HTH lysR-type domain occupies 1 to 58; the sequence is MELRDLQIFQSVADQGSVSSAAKELNYVQSNVTARIKQLENELKTPLFYRHKRGMTLT. Positions 18–37 form a DNA-binding region, H-T-H motif; it reads VSSAAKELNYVQSNVTARIK.

Belongs to the LysR transcriptional regulatory family.

The sequence is that of HTH-type transcriptional regulator CzcR (czcR) from Bacillus cereus (strain ATCC 10987 / NRS 248).